The following is a 706-amino-acid chain: Glycine--tRNA ligase beta subunit (706 aa).

It belongs to the class-II aminoacyl-tRNA synthetase family. In terms of assembly, tetramer of two alpha and two beta subunits.

The protein resides in the cytoplasm. The enzyme catalyses tRNA(Gly) + glycine + ATP = glycyl-tRNA(Gly) + AMP + diphosphate. The polypeptide is Glycine--tRNA ligase beta subunit (Hyphomonas neptunium (strain ATCC 15444)).